The sequence spans 100 residues: Small ribosomal subunit protein uS14c (100 aa).

The protein belongs to the universal ribosomal protein uS14 family. In terms of assembly, part of the 30S ribosomal subunit.

The protein localises to the plastid. Its function is as follows. Binds 16S rRNA, required for the assembly of 30S particles. In Euglena longa (Euglenophycean alga), this protein is Small ribosomal subunit protein uS14c.